Consider the following 60-residue polypeptide: Small integral membrane protein 3 (60 aa).

The helical transmembrane segment at 20–40 (IWAIVLIILATVVIMTSLFLC) threads the bilayer.

The protein localises to the membrane. This Rattus norvegicus (Rat) protein is Small integral membrane protein 3 (Smim3).